The sequence spans 766 residues: BMP/retinoic acid-inducible neural-specific protein 3 (766 aa).

The signal sequence occupies residues 1-33 (MIWRRRAGAELSSLMALWEWIVLSLHCWVLAVA). The MACPF domain occupies 74 to 264 (RYKIYREFGR…FVQAALSYIA (191 aa)). N-linked (GlcNAc...) asparagine glycosylation is found at N168, N337, N456, N562, N609, and N641.

The protein belongs to the BRINP family. As to expression, expressed in the brain. Weakly expressed in embryonic stem (ES) cells. Expressed in ES-derived neural stem cells (NSCs) and neuronal cells.

It localises to the secreted. The protein localises to the mitochondrion. Its function is as follows. Inhibits neuronal cell proliferation by negative regulation of the cell cycle transition. Promotes pituitary gonadotrope cell proliferation, migration and invasion, when overexpressed. May play a role in cell pituitary tumor development. The chain is BMP/retinoic acid-inducible neural-specific protein 3 (Brinp3) from Mus musculus (Mouse).